The chain runs to 329 residues: 4-hydroxythreonine-4-phosphate dehydrogenase (329 aa).

Substrate is bound by residues His136 and Thr137. Residues His166, His211, and His266 each coordinate a divalent metal cation. Residues Lys274, Asn283, and Arg292 each coordinate substrate.

Belongs to the PdxA family. As to quaternary structure, homodimer. The cofactor is Zn(2+). It depends on Mg(2+) as a cofactor. Co(2+) serves as cofactor.

It is found in the cytoplasm. It catalyses the reaction 4-(phosphooxy)-L-threonine + NAD(+) = 3-amino-2-oxopropyl phosphate + CO2 + NADH. The protein operates within cofactor biosynthesis; pyridoxine 5'-phosphate biosynthesis; pyridoxine 5'-phosphate from D-erythrose 4-phosphate: step 4/5. In terms of biological role, catalyzes the NAD(P)-dependent oxidation of 4-(phosphooxy)-L-threonine (HTP) into 2-amino-3-oxo-4-(phosphooxy)butyric acid which spontaneously decarboxylates to form 3-amino-2-oxopropyl phosphate (AHAP). The polypeptide is 4-hydroxythreonine-4-phosphate dehydrogenase (Escherichia coli O139:H28 (strain E24377A / ETEC)).